Reading from the N-terminus, the 525-residue chain is GMP synthase [glutamine-hydrolyzing] (525 aa).

In terms of domain architecture, Glutamine amidotransferase type-1 spans 9–207 (RILILDFGSQ…VRDICQCEAL (199 aa)). The active-site Nucleophile is Cys-86. Catalysis depends on residues His-181 and Glu-183. The 193-residue stretch at 208-400 (WTPAKIIDDA…LGLPYDMLYR (193 aa)) folds into the GMPS ATP-PPase domain. 235 to 241 (SGGVDSS) contributes to the ATP binding site.

As to quaternary structure, homodimer.

The catalysed reaction is XMP + L-glutamine + ATP + H2O = GMP + L-glutamate + AMP + diphosphate + 2 H(+). Its pathway is purine metabolism; GMP biosynthesis; GMP from XMP (L-Gln route): step 1/1. Its function is as follows. Catalyzes the synthesis of GMP from XMP. In Salmonella arizonae (strain ATCC BAA-731 / CDC346-86 / RSK2980), this protein is GMP synthase [glutamine-hydrolyzing].